The primary structure comprises 46 residues: Large ribosomal subunit protein bL34 (46 aa).

Residues 1-17 (MTKRTLRGSVRKKKRTS) are compositionally biased toward basic residues. The disordered stretch occupies residues 1–26 (MTKRTLRGSVRKKKRTSGFRARMETP).

The protein belongs to the bacterial ribosomal protein bL34 family.

In Pseudanabaena sp. (strain PCC 6903), this protein is Large ribosomal subunit protein bL34 (rpmH).